A 455-amino-acid polypeptide reads, in one-letter code: Bleomycin hydrolase (455 aa).

Met1 is modified (N-acetylmethionine). Catalysis depends on residues Cys73 and His372. Lys391 is subject to N6-acetyllysine. Residue Asn396 is part of the active site.

Belongs to the peptidase C1 family. Homohexamer. Interacts with NUDT12 (via ANK repeats).

The protein resides in the cytoplasm. Its subcellular location is the cytoplasmic granule. It catalyses the reaction Inactivates bleomycin B2 (a cytotoxic glycometallopeptide) by hydrolysis of a carboxyamide bond of beta-aminoalanine, but also shows general aminopeptidase activity. The specificity varies somewhat with source, but amino acid arylamides of Met, Leu and Ala are preferred.. The normal physiological role of BLM hydrolase is unknown, but it catalyzes the inactivation of the antitumor drug BLM (a glycopeptide) by hydrolyzing the carboxamide bond of its B-aminoalaninamide moiety thus protecting normal and malignant cells from BLM toxicity. The polypeptide is Bleomycin hydrolase (BLMH) (Homo sapiens (Human)).